Reading from the N-terminus, the 433-residue chain is L-2-hydroxyglutarate dehydrogenase, mitochondrial (433 aa).

This sequence belongs to the L2HGDH family. Requires FAD as cofactor.

It localises to the mitochondrion. It catalyses the reaction (S)-2-hydroxyglutarate + A = 2-oxoglutarate + AH2. The sequence is that of L-2-hydroxyglutarate dehydrogenase, mitochondrial from Caenorhabditis elegans.